The sequence spans 198 residues: Transcription factor elt-7 (198 aa).

Residues 1–18 show a composition bias toward polar residues; sequence MLPETTTLQPLPSVTTIM. Residues 1 to 20 are disordered; the sequence is MLPETTTLQPLPSVTTIMNE. Residues 143–167 form a GATA-type zinc finger; the sequence is CSHCSTTTTTLWRKNDEGNLECNAC.

Its subcellular location is the nucleus. Its function is as follows. Transcriptional activator that binds to the consensus sequence 5'-[AT]GATA[AG]-3'. Required for gut-specific differentiation, specifically acting with the GATA region-binding transcription factor elt-2 to control normal gene expression and promote normal formation of the intestine. May have a protective role in response to infection by Gram-negative bacteria such as P.aeruginosa. This Caenorhabditis elegans protein is Transcription factor elt-7.